The chain runs to 142 residues: MAMAVEFKTYVDQACRAAEEFVNIYYETMDKRRRALTRLYLDKATLIWNGNVVTGLEALANFFDMLPSSEFQVNMLDCQPVHEQATQSQTTVLVVTSGTVKFDGNKQHYFNQNFLLTAQTTANNTVWKIASDCFRFQDWATI.

Positions 17–136 constitute an NTF2 domain; the sequence is AAEEFVNIYY…WKIASDCFRF (120 aa).

As to quaternary structure, associates with NXF1, NXF2, NXF3 and NXF5.

It localises to the nucleus. It is found in the cytoplasm. Its function is as follows. Regulator of protein export for NES-containing proteins. Also plays a role in mRNA nuclear export. This chain is NTF2-related export protein 2 (NXT2), found in Bos taurus (Bovine).